The sequence spans 115 residues: NADH-ubiquinone oxidoreductase chain 3 (115 aa).

Transmembrane regions (helical) follow at residues Phe4–Leu24, Phe55–Leu75, and Ile86–Trp106.

This sequence belongs to the complex I subunit 3 family. In terms of assembly, core subunit of respiratory chain NADH dehydrogenase (Complex I) which is composed of 45 different subunits. Interacts with TMEM186. Interacts with TMEM242.

It localises to the mitochondrion inner membrane. The catalysed reaction is a ubiquinone + NADH + 5 H(+)(in) = a ubiquinol + NAD(+) + 4 H(+)(out). Core subunit of the mitochondrial membrane respiratory chain NADH dehydrogenase (Complex I) which catalyzes electron transfer from NADH through the respiratory chain, using ubiquinone as an electron acceptor. Essential for the catalytic activity of complex I. The protein is NADH-ubiquinone oxidoreductase chain 3 of Reithrodontomys fulvescens (Fulvous harvest mouse).